A 218-amino-acid chain; its full sequence is ATP phosphoribosyltransferase (218 aa).

This sequence belongs to the ATP phosphoribosyltransferase family. Short subfamily. In terms of assembly, heteromultimer composed of HisG and HisZ subunits.

It is found in the cytoplasm. The catalysed reaction is 1-(5-phospho-beta-D-ribosyl)-ATP + diphosphate = 5-phospho-alpha-D-ribose 1-diphosphate + ATP. It participates in amino-acid biosynthesis; L-histidine biosynthesis; L-histidine from 5-phospho-alpha-D-ribose 1-diphosphate: step 1/9. Its function is as follows. Catalyzes the condensation of ATP and 5-phosphoribose 1-diphosphate to form N'-(5'-phosphoribosyl)-ATP (PR-ATP). Has a crucial role in the pathway because the rate of histidine biosynthesis seems to be controlled primarily by regulation of HisG enzymatic activity. In Burkholderia thailandensis (strain ATCC 700388 / DSM 13276 / CCUG 48851 / CIP 106301 / E264), this protein is ATP phosphoribosyltransferase.